A 554-amino-acid polypeptide reads, in one-letter code: uncharacterized protein (554 aa).

The protein to M.jannaschii MJ0047, MJ0162 and MJ1236.

This is an uncharacterized protein from Synechocystis sp. (strain ATCC 27184 / PCC 6803 / Kazusa).